We begin with the raw amino-acid sequence, 824 residues long: Type IV secretion system protein PtlC (824 aa).

456 to 463 contacts ATP; sequence GQSGSGKT.

The protein belongs to the TrbE/VirB4 family.

The protein resides in the cell membrane. In terms of biological role, component of the type IV secretion system ptl essential for secretion of assembled pertussis toxin (PTX) through the outer membrane. This chain is Type IV secretion system protein PtlC (ptlC), found in Bordetella pertussis (strain Tohama I / ATCC BAA-589 / NCTC 13251).